The sequence spans 492 residues: MDLYTLLTSALCTLALPLLLLLTAAKLWEVYCLRRKDAACANPLPPGTMGLPFFGETLQMVLQRRRFLQVKRSQYGRIYKTHLFGSPTVRVTGAENVRQILMGEHKLVSVHWPASVRTILGAGCLSNLHDNEHKYTKKVIAQAFSREALANYVPQMEEEVRCSVNLWLQSGPCVLVYPAIKRMMFRIAMRLLLGCDPQRMDREQEETLLEAFEEMSRNLFSLPIDVPFSGLYRGLRARNLIHAQIEENIKEKLQREPDEHCKDALQLLIDYSRRNGEPINLQALKESATELLFGGHGTTASAATSLTSFLALHKDVLEKVRKELETQGLLSTKPEEKKELSIEVLQQLKYTSCVIKETLRLSPPVAGGFRVALKTFVLNGYQIPKGWNVIYSIADTHGEADLFPDTDKFNPDRFLTPLPRDSSRFGFIPFGGGVRCCIGKEFAKILLKVFVVELCRNCDWELLNGSPAMTTSPIICPVDNLPAKFKPFSSSI.

C437 is a binding site for heme.

It belongs to the cytochrome P450 family. Heme is required as a cofactor. As to expression, expressed primarily in ovary, brain and eyes.

It localises to the endoplasmic reticulum membrane. It is found in the microsome membrane. The catalysed reaction is all-trans-retinoate + reduced [NADPH--hemoprotein reductase] + O2 = all-trans-(4S)-hydroxyretinoate + oxidized [NADPH--hemoprotein reductase] + H2O + H(+). Its function is as follows. A cytochrome P450 monooxygenase involved in the metabolism of all-trans retinoic acid (atRA), a signaling molecule that binds to retinoic acid receptors and regulates gene transcription. May regulate at-RA signaling during hindbrain development. Mechanistically, uses molecular oxygen inserting one oxygen atom into a substrate, and reducing the second into a water molecule, with two electrons provided by NADPH via cytochrome P450 reductase (CPR; NADPH-ferrihemoprotein reductase). Catalyzes the hydroxylation of carbon hydrogen bonds of atRA primarily at C-4. Has no activity toward 9-cis and 13-cis retinoic acid stereoisomers. May play a role in the oxidative metabolism of xenobiotics such as tazarotenic acid. This chain is Cytochrome P450 26A1 (cyp26a1), found in Xenopus laevis (African clawed frog).